The sequence spans 432 residues: Serine--tRNA ligase (432 aa).

236–238 (TSE) provides a ligand contact to L-serine. Position 267–269 (267–269 (RSE)) interacts with ATP. Residue glutamate 290 coordinates L-serine. An ATP-binding site is contributed by 354 to 357 (EISS). Residue serine 390 participates in L-serine binding.

The protein belongs to the class-II aminoacyl-tRNA synthetase family. Type-1 seryl-tRNA synthetase subfamily. In terms of assembly, homodimer. The tRNA molecule binds across the dimer.

It is found in the cytoplasm. It carries out the reaction tRNA(Ser) + L-serine + ATP = L-seryl-tRNA(Ser) + AMP + diphosphate + H(+). The catalysed reaction is tRNA(Sec) + L-serine + ATP = L-seryl-tRNA(Sec) + AMP + diphosphate + H(+). Its pathway is aminoacyl-tRNA biosynthesis; selenocysteinyl-tRNA(Sec) biosynthesis; L-seryl-tRNA(Sec) from L-serine and tRNA(Sec): step 1/1. Functionally, catalyzes the attachment of serine to tRNA(Ser). Is also able to aminoacylate tRNA(Sec) with serine, to form the misacylated tRNA L-seryl-tRNA(Sec), which will be further converted into selenocysteinyl-tRNA(Sec). The protein is Serine--tRNA ligase of Pseudoalteromonas atlantica (strain T6c / ATCC BAA-1087).